A 490-amino-acid polypeptide reads, in one-letter code: Cytochrome P450 2C50 (490 aa).

Position 127 is a phosphoserine (Ser127). N6-acetyllysine occurs at positions 249 and 375. Cys435 is a binding site for heme.

The protein belongs to the cytochrome P450 family. Requires heme as cofactor. In terms of tissue distribution, expressed in heart and liver.

It is found in the endoplasmic reticulum membrane. It localises to the microsome membrane. It catalyses the reaction an organic molecule + reduced [NADPH--hemoprotein reductase] + O2 = an alcohol + oxidized [NADPH--hemoprotein reductase] + H2O + H(+). Functionally, metabolizes arachidonic acid to several midchain and omega-terminal hydroxyeicosatetraenoic acids (HETE). This Mus musculus (Mouse) protein is Cytochrome P450 2C50.